The following is a 415-amino-acid chain: Adipocyte plasma membrane-associated protein (415 aa).

Topologically, residues 1–39 (MNEPEGLRFRRLNRPHIITDETHEPQYKATSTYSGKVFR) are cytoplasmic. The chain crosses the membrane as a helical span at residues 40–60 (VTLLTMVAFLLLPLLVVVFVL). Residues 61 to 412 (ESPIQPEVFS…RSPYLCKLDL (352 aa)) are Extracellular-facing. Asn159 is a glycosylation site (N-linked (GlcNAc...) asparagine).

It belongs to the strictosidine synthase family.

It localises to the membrane. In Danio rerio (Zebrafish), this protein is Adipocyte plasma membrane-associated protein (apmap).